Consider the following 340-residue polypeptide: 4-hydroxy-2-oxovalerate aldolase (340 aa).

One can recognise a Pyruvate carboxyltransferase domain in the interval 5-255; the sequence is IVITEVALRD…QTGVDLYKMM (251 aa). Residue 13–14 coordinates substrate; the sequence is RD. Position 14 (D14) interacts with Mn(2+). The Proton acceptor role is filled by H17. Substrate contacts are provided by S167 and H194. Mn(2+)-binding residues include H194 and H196. Y285 lines the substrate pocket.

Belongs to the 4-hydroxy-2-oxovalerate aldolase family.

The enzyme catalyses (S)-4-hydroxy-2-oxopentanoate = acetaldehyde + pyruvate. This Brevibacillus brevis (strain 47 / JCM 6285 / NBRC 100599) protein is 4-hydroxy-2-oxovalerate aldolase.